Here is a 546-residue protein sequence, read N- to C-terminus: Delta-1-pyrroline-5-carboxylate dehydrogenase (546 aa).

Residue 279–284 (KDISSN) coordinates NAD(+). Residue glutamate 297 is the Proton acceptor of the active site. Cysteine 331 (nucleophile) is an active-site residue.

This sequence belongs to the aldehyde dehydrogenase family.

The protein localises to the cytoplasm. It carries out the reaction L-glutamate 5-semialdehyde + NAD(+) + H2O = L-glutamate + NADH + 2 H(+). The protein operates within amino-acid degradation; L-proline degradation into L-glutamate; L-glutamate from L-proline: step 2/2. This Agaricus bisporus (White button mushroom) protein is Delta-1-pyrroline-5-carboxylate dehydrogenase (pruA).